The sequence spans 875 residues: Translation initiation factor IF-2 (875 aa).

Disordered stretches follow at residues 1–20 (MSDS…LKTA), 47–102 (LMGR…LREA), and 126–246 (EEER…DRRG). The segment covering 54 to 66 (AAPTAAPAAAATP) has biased composition (low complexity). Pro residues predominate over residues 67-85 (APTPVAPPPPPPPPPPPPS). 2 stretches are compositionally biased toward basic and acidic residues: residues 88–102 (RETR…LREA) and 126–140 (EEER…RAEA). Composition is skewed to low complexity over residues 141–195 (EAAA…PAAP) and 202–221 (PAAP…PAAP). The segment covering 223–246 (KRPELAAKKPAHPQRDRKTEDRRG) has biased composition (basic and acidic residues). Residues 374-544 (ARPPVVTIMG…LLQAELLELK (171 aa)) enclose the tr-type G domain. A G1 region spans residues 383–390 (GHVDHGKT). Position 383 to 390 (383 to 390 (GHVDHGKT)) interacts with GTP. Residues 408–412 (GITQH) form a G2 region. Positions 430–433 (DTPG) are G3. Residues 430-434 (DTPGH) and 484-487 (TKAD) contribute to the GTP site. A G4 region spans residues 484-487 (TKAD). Residues 520 to 522 (SAK) form a G5 region.

This sequence belongs to the TRAFAC class translation factor GTPase superfamily. Classic translation factor GTPase family. IF-2 subfamily.

It localises to the cytoplasm. Functionally, one of the essential components for the initiation of protein synthesis. Protects formylmethionyl-tRNA from spontaneous hydrolysis and promotes its binding to the 30S ribosomal subunits. Also involved in the hydrolysis of GTP during the formation of the 70S ribosomal complex. The protein is Translation initiation factor IF-2 of Novosphingobium aromaticivorans (strain ATCC 700278 / DSM 12444 / CCUG 56034 / CIP 105152 / NBRC 16084 / F199).